Consider the following 642-residue polypeptide: Chaperone protein DnaK (642 aa).

T200 carries the post-translational modification Phosphothreonine; by autocatalysis. Positions 600 to 616 (EAAQQSAGAAGPMPGAP) are enriched in low complexity. Positions 600-642 (EAAQQSAGAAGPMPGAPAEEEPSDGPRKAKGRVVDAEIVDDDK) are disordered. Residues 623-634 (DGPRKAKGRVVD) show a composition bias toward basic and acidic residues.

This sequence belongs to the heat shock protein 70 family.

Functionally, acts as a chaperone. In Akkermansia muciniphila (strain ATCC BAA-835 / DSM 22959 / JCM 33894 / BCRC 81048 / CCUG 64013 / CIP 107961 / Muc), this protein is Chaperone protein DnaK.